Here is a 233-residue protein sequence, read N- to C-terminus: Probable RNA 2'-phosphotransferase (233 aa).

The protein belongs to the KptA/TPT1 family.

Functionally, removes the 2'-phosphate from RNA via an intermediate in which the phosphate is ADP-ribosylated by NAD followed by a presumed transesterification to release the RNA and generate ADP-ribose 1''-2''-cyclic phosphate (APPR&gt;P). May function as an ADP-ribosylase. In Hyperthermus butylicus (strain DSM 5456 / JCM 9403 / PLM1-5), this protein is Probable RNA 2'-phosphotransferase.